The sequence spans 427 residues: Glutamate-1-semialdehyde 2,1-aminomutase (427 aa).

Lys265 carries the N6-(pyridoxal phosphate)lysine modification.

Belongs to the class-III pyridoxal-phosphate-dependent aminotransferase family. HemL subfamily. As to quaternary structure, homodimer. It depends on pyridoxal 5'-phosphate as a cofactor.

The protein localises to the cytoplasm. It carries out the reaction (S)-4-amino-5-oxopentanoate = 5-aminolevulinate. Its pathway is porphyrin-containing compound metabolism; protoporphyrin-IX biosynthesis; 5-aminolevulinate from L-glutamyl-tRNA(Glu): step 2/2. The polypeptide is Glutamate-1-semialdehyde 2,1-aminomutase (Mannheimia succiniciproducens (strain KCTC 0769BP / MBEL55E)).